Consider the following 203-residue polypeptide: Reticulon-like protein B12 (203 aa).

Residues 24–203 form the Reticulon domain; sequence VADVMLWRKK…WANPENKKLS (180 aa). Transmembrane regions (helical) follow at residues 34–54, 55–75, and 132–152; these read NVSV…EAFA, YTIF…LFLW, and VAVS…QTLC.

Its subcellular location is the endoplasmic reticulum membrane. The polypeptide is Reticulon-like protein B12 (RTNLB12) (Arabidopsis thaliana (Mouse-ear cress)).